Consider the following 357-residue polypeptide: Ribosomal RNA large subunit methyltransferase M (357 aa).

S-adenosyl-L-methionine-binding positions include S183, 216–219 (APGG), D235, D255, and D271. The active-site Proton acceptor is K300.

The protein belongs to the class I-like SAM-binding methyltransferase superfamily. RNA methyltransferase RlmE family. RlmM subfamily. Monomer.

The protein localises to the cytoplasm. The enzyme catalyses cytidine(2498) in 23S rRNA + S-adenosyl-L-methionine = 2'-O-methylcytidine(2498) in 23S rRNA + S-adenosyl-L-homocysteine + H(+). Its function is as follows. Catalyzes the 2'-O-methylation at nucleotide C2498 in 23S rRNA. The sequence is that of Ribosomal RNA large subunit methyltransferase M from Pseudomonas syringae pv. tomato (strain ATCC BAA-871 / DC3000).